The primary structure comprises 239 residues: MVIKAQSPAGFAEEYIIESIWNNRFPPGSILPAERELSELIGVTRTTLREVLQRLARDGWLTIQHGKPTKINNFWETSGLNILETLARLDHDSVPQLIDNLLAVRTNIAAIFIRTALRHNPEKVRDVLTQSSAVDDSAEAFAQLDYNVFRGLAFASGNPIYGLILNGLKGLYIRVGRYYFSNPEARKLAVNFYGRLEALRSEELYDQVMDVVRHYGKESGAIWHSMQSAIPRDIAEVRR.

The 69-residue stretch at 6-74 (QSPAGFAEEY…HGKPTKINNF (69 aa)) folds into the HTH gntR-type domain. Positions 34 to 53 (ERELSELIGVTRTTLREVLQ) form a DNA-binding region, H-T-H motif.

Homodimer.

It is found in the cytoplasm. In terms of biological role, multifunctional regulator of fatty acid metabolism. This chain is Fatty acid metabolism regulator protein, found in Pectobacterium atrosepticum (strain SCRI 1043 / ATCC BAA-672) (Erwinia carotovora subsp. atroseptica).